The sequence spans 103 residues: Large ribosomal subunit protein eL21 (103 aa).

This sequence belongs to the eukaryotic ribosomal protein eL21 family.

The polypeptide is Large ribosomal subunit protein eL21 (Sulfolobus acidocaldarius (strain ATCC 33909 / DSM 639 / JCM 8929 / NBRC 15157 / NCIMB 11770)).